We begin with the raw amino-acid sequence, 255 residues long: Small ribosomal subunit protein eS1 (255 aa).

A compositionally biased stretch (basic residues) spans 1 to 18 (MAVGKNKRLSKGKKGLKK). Residues 1–22 (MAVGKNKRLSKGKKGLKKRAQD) form a disordered region. An N-acetylalanine; partial modification is found at Ala-2.

It belongs to the eukaryotic ribosomal protein eS1 family. As to quaternary structure, component of the small ribosomal subunit. Mature ribosomes consist of a small (40S) and a large (60S) subunit. The 40S subunit contains about 33 different proteins and 1 molecule of RNA (18S). The 60S subunit contains about 49 different proteins and 3 molecules of RNA (25S, 5.8S and 5S).

Its subcellular location is the cytoplasm. The sequence is that of Small ribosomal subunit protein eS1 from Uncinocarpus reesii (strain UAMH 1704).